A 192-amino-acid chain; its full sequence is MEVSGESHSGPSCSSSSRDGSGVSVSKELLMAGSGGRGGIWDRLFINSKPNSRKNSTLQTVRIERSPLLDQVRTFLPQMAQANEKLRKEMAAAPPGHFNIENTDETLGQVIQMDVALFEMNQSHSKEEDSSEENSQDSSEESSESEDEDDSTSSEGEVTIDNIKLPHSEDGKGKIEVLDSPASENKEKQENK.

Over residues 1–26 (MEVSGESHSGPSCSSSSRDGSGVSVS) the composition is skewed to low complexity. Residues 1–39 (MEVSGESHSGPSCSSSSRDGSGVSVSKELLMAGSGGRGG) form a disordered region. Phosphoserine is present on residues Ser34 and Ser66. The segment at 118 to 192 (FEMNQSHSKE…SENKEKQENK (75 aa)) is disordered. The segment covering 129 to 152 (DSSEENSQDSSEESSESEDEDDST) has biased composition (acidic residues). The segment covering 164-177 (KLPHSEDGKGKIEV) has biased composition (basic and acidic residues). Residue Ser180 is modified to Phosphoserine.

In terms of assembly, interacts with NOP58, RUVBL1 and RUVBL2; the interactions are direct and NOPCHAP1 bridges the association of NOP58 with RUVBL1:RUVBL2 even in absence of snoRNAs. The interactions with RUVBL1 and RUVBL2 are disrupted upon ATP binding.

Its subcellular location is the nucleus. Client-loading PAQosome/R2TP complex cofactor that selects NOP58 to promote box C/D small nucleolar ribonucleoprotein (snoRNP) assembly. Acts as a bridge between NOP58 and the R2TP complex via RUVBL1:RUVBL2. The protein is NOP protein chaperone 1 (NOPCHAP1) of Bos taurus (Bovine).